Here is a 174-residue protein sequence, read N- to C-terminus: NADH-ubiquinone oxidoreductase chain 6 (174 aa).

Transmembrane regions (helical) follow at residues 4–24 (LIIM…KHPL), 25–45 (SMGL…GIYV), 48–68 (FWFS…LFIY), 82–102 (FNLT…FFII), and 143–163 (LITL…VKIT).

It belongs to the complex I subunit 6 family.

Its subcellular location is the mitochondrion membrane. The enzyme catalyses a ubiquinone + NADH + 5 H(+)(in) = a ubiquinol + NAD(+) + 4 H(+)(out). Core subunit of the mitochondrial membrane respiratory chain NADH dehydrogenase (Complex I) that is believed to belong to the minimal assembly required for catalysis. Complex I functions in the transfer of electrons from NADH to the respiratory chain. The immediate electron acceptor for the enzyme is believed to be ubiquinone. The chain is NADH-ubiquinone oxidoreductase chain 6 (ND6) from Anopheles quadrimaculatus (Common malaria mosquito).